Here is a 136-residue protein sequence, read N- to C-terminus: Peptide deformylase (136 aa).

Cys85 and His126 together coordinate Fe cation. Glu127 is an active-site residue. His130 contributes to the Fe cation binding site.

It belongs to the polypeptide deformylase family. Requires Fe(2+) as cofactor.

It carries out the reaction N-terminal N-formyl-L-methionyl-[peptide] + H2O = N-terminal L-methionyl-[peptide] + formate. In terms of biological role, removes the formyl group from the N-terminal Met of newly synthesized proteins. Requires at least a dipeptide for an efficient rate of reaction. N-terminal L-methionine is a prerequisite for activity but the enzyme has broad specificity at other positions. The sequence is that of Peptide deformylase from Clostridium beijerinckii (strain ATCC 51743 / NCIMB 8052) (Clostridium acetobutylicum).